The primary structure comprises 255 residues: tRNA (guanine-N(1)-)-methyltransferase (255 aa).

S-adenosyl-L-methionine is bound by residues G113 and 133–138; that span reads IGDYVL.

It belongs to the RNA methyltransferase TrmD family. As to quaternary structure, homodimer.

Its subcellular location is the cytoplasm. It catalyses the reaction guanosine(37) in tRNA + S-adenosyl-L-methionine = N(1)-methylguanosine(37) in tRNA + S-adenosyl-L-homocysteine + H(+). Functionally, specifically methylates guanosine-37 in various tRNAs. The protein is tRNA (guanine-N(1)-)-methyltransferase of Escherichia coli O6:K15:H31 (strain 536 / UPEC).